The primary structure comprises 245 residues: tRNA1(Val) (adenine(37)-N6)-methyltransferase (245 aa).

Belongs to the methyltransferase superfamily. tRNA (adenine-N(6)-)-methyltransferase family.

The protein resides in the cytoplasm. The enzyme catalyses adenosine(37) in tRNA1(Val) + S-adenosyl-L-methionine = N(6)-methyladenosine(37) in tRNA1(Val) + S-adenosyl-L-homocysteine + H(+). In terms of biological role, specifically methylates the adenine in position 37 of tRNA(1)(Val) (anticodon cmo5UAC). In Klebsiella pneumoniae (strain 342), this protein is tRNA1(Val) (adenine(37)-N6)-methyltransferase.